The chain runs to 266 residues: Glucosamine-6-phosphate deaminase (266 aa).

D72 (proton acceptor; for enolization step) is an active-site residue. Catalysis depends on D141, which acts as the For ring-opening step. H143 acts as the Proton acceptor; for ring-opening step in catalysis. Residue E148 is the For ring-opening step of the active site.

This sequence belongs to the glucosamine/galactosamine-6-phosphate isomerase family. NagB subfamily. In terms of assembly, homohexamer.

It catalyses the reaction alpha-D-glucosamine 6-phosphate + H2O = beta-D-fructose 6-phosphate + NH4(+). Its pathway is amino-sugar metabolism; N-acetylneuraminate degradation; D-fructose 6-phosphate from N-acetylneuraminate: step 5/5. Its activity is regulated as follows. Allosterically activated by N-acetylglucosamine 6-phosphate (GlcNAc6P). Catalyzes the reversible isomerization-deamination of glucosamine 6-phosphate (GlcN6P) to form fructose 6-phosphate (Fru6P) and ammonium ion. This Yersinia pestis bv. Antiqua (strain Antiqua) protein is Glucosamine-6-phosphate deaminase.